A 1746-amino-acid chain; its full sequence is Tenascin (1746 aa).

Positions 1 to 22 (MGVVTRLLVGTFLASLALPAQG) are cleaved as a signal peptide. The tract at residues 23–185 (GVLKKVIRHK…CEPGWKGPNC (163 aa)) is involved in hexamer formation. Asparagine 38 is a glycosylation site (N-linked (GlcNAc...) asparagine). A phosphoserine mark is found at serine 65, serine 70, and serine 72. O-linked (Xyl...) (chondroitin sulfate) serine glycosylation is present at serine 72. The stretch at 118 to 145 (DVKELLSRLEELENLVSSLREQCTSGAG) forms a coiled coil. 2 N-linked (GlcNAc...) asparagine glycosylation sites follow: asparagine 166 and asparagine 184. The region spanning 174–186 (CVCEPGWKGPNCS) is the EGF-like 1; incomplete domain. 14 EGF-like domains span residues 187–217 (EPECPSNCHLRGQCVDGQCVCNEGFTGEDCS), 218–249 (QLACPSDCNDQGKCVNGVCVCFEGYSGVDCSR), 250–280 (ETCPVPCSEEHGRCVDGRCVCQEGFAGEDCN), 281–311 (EPLCLHNCHGRGRCVENECVCDEGFTGEDCG), 312–342 (ELICPKDCFDRGRCINGTCYCDEGFEGEDCG), 343–373 (RLACPHGCRGRGRCEEGQCVCDEGFAGADCS), 374–404 (ERRCPSDCHNRGRCLDGRCECDDGFEGEDCG), 405–435 (ELRCPGGCSGHGRCVNGQCVCDEGRTGEDCS), 436–466 (QLRCPNDCHGRGRCVQGRCECEHGFQGYDCS), 467–497 (EMSCPHDCHQHGRCVNGMCVCDDGYTGEDCR), 498–528 (ELRCPGDCSQRGRCVDGRCVCEHGFAGPDCA), 529–559 (DLACPSDCHGRGRCVNGQCVCHEGFTGKDCG), 560–589 (QRRCPGDCHGQGRCVDGQCVCHEGFTGLDC), and 590–620 (GQRSCPNDCSNWGQCVSGRCICNEGYSGEDC). 42 disulfides stabilise this stretch: cysteine 190–cysteine 200, cysteine 194–cysteine 205, cysteine 207–cysteine 216, cysteine 221–cysteine 231, cysteine 225–cysteine 236, cysteine 238–cysteine 247, cysteine 252–cysteine 263, cysteine 256–cysteine 268, cysteine 270–cysteine 279, cysteine 284–cysteine 294, cysteine 288–cysteine 299, cysteine 301–cysteine 310, cysteine 315–cysteine 325, cysteine 319–cysteine 330, cysteine 332–cysteine 341, cysteine 346–cysteine 356, cysteine 350–cysteine 361, cysteine 363–cysteine 372, cysteine 377–cysteine 387, cysteine 381–cysteine 392, cysteine 394–cysteine 403, cysteine 408–cysteine 418, cysteine 412–cysteine 423, cysteine 425–cysteine 434, cysteine 439–cysteine 449, cysteine 443–cysteine 454, cysteine 456–cysteine 465, cysteine 470–cysteine 480, cysteine 474–cysteine 485, cysteine 487–cysteine 496, cysteine 501–cysteine 511, cysteine 505–cysteine 516, cysteine 518–cysteine 527, cysteine 532–cysteine 542, cysteine 536–cysteine 547, cysteine 549–cysteine 558, cysteine 563–cysteine 573, cysteine 567–cysteine 578, cysteine 580–cysteine 589, cysteine 594–cysteine 604, cysteine 598–cysteine 609, and cysteine 611–cysteine 620. The N-linked (GlcNAc...) asparagine glycan is linked to asparagine 327. Fibronectin type-III domains follow at residues 625–717 (PPKD…TPEG), 718–801 (LKFK…VTTT), 805–894 (APSQ…TGLD), 895–988 (APRN…LDPP), 989–1075 (KDFR…AGEP), 1076–1166 (EIGN…EAEP), 1167–1256 (EVDN…TAMG), 1257–1346 (SPKE…ALDG), 1347–1433 (PSGL…TDLD), and 1434–1522 (SPRD…IGLL). Asparagine 788 is a glycosylation site (N-linked (GlcNAc...) asparagine). Residue threonine 905 is modified to Phosphothreonine. N-linked (GlcNAc...) asparagine glycans are attached at residues asparagine 1034, asparagine 1079, and asparagine 1121. Asparagine 1354 carries an N-linked (GlcNAc...) asparagine glycan. The region spanning 1520–1735 (GLLYPFPRDC…FAEMKLRPSN (216 aa)) is the Fibrinogen C-terminal domain.

Belongs to the tenascin family. As to quaternary structure, homohexamer; disulfide-linked. A homotrimer may be formed in the triple coiled-coil region and may be stabilized by disulfide rings at both ends. Two of such half-hexabrachions may be disulfide linked within the central globule. Interacts with CSPG4. Interacts (via the 3rd fibronectin type-III domain) with integrin ITGA9:ITGB1. In terms of tissue distribution, submaxillary glands and brain.

The protein resides in the secreted. The protein localises to the extracellular space. It is found in the extracellular matrix. In terms of biological role, extracellular matrix protein implicated in guidance of migrating neurons as well as axons during development, synaptic plasticity as well as neuronal regeneration. Promotes neurite outgrowth from cortical neurons grown on a monolayer of astrocytes. Ligand for integrins alpha-8/beta-1, alpha-9/beta-1, alpha-V/beta-3 and alpha-V/beta-6. In tumors, stimulates angiogenesis by elongation, migration and sprouting of endothelial cells. The chain is Tenascin (TNC) from Sus scrofa (Pig).